Reading from the N-terminus, the 201-residue chain is ATP-dependent Clp protease proteolytic subunit 2 (201 aa).

Residue Ser-98 is the Nucleophile of the active site. His-123 is a catalytic residue.

Belongs to the peptidase S14 family. As to quaternary structure, fourteen ClpP subunits assemble into 2 heptameric rings which stack back to back to give a disk-like structure with a central cavity, resembling the structure of eukaryotic proteasomes.

Its subcellular location is the cytoplasm. It carries out the reaction Hydrolysis of proteins to small peptides in the presence of ATP and magnesium. alpha-casein is the usual test substrate. In the absence of ATP, only oligopeptides shorter than five residues are hydrolyzed (such as succinyl-Leu-Tyr-|-NHMec, and Leu-Tyr-Leu-|-Tyr-Trp, in which cleavage of the -Tyr-|-Leu- and -Tyr-|-Trp bonds also occurs).. In terms of biological role, cleaves peptides in various proteins in a process that requires ATP hydrolysis. Has a chymotrypsin-like activity. Plays a major role in the degradation of misfolded proteins. The chain is ATP-dependent Clp protease proteolytic subunit 2 from Rhizobium johnstonii (strain DSM 114642 / LMG 32736 / 3841) (Rhizobium leguminosarum bv. viciae).